A 476-amino-acid polypeptide reads, in one-letter code: Ribulose bisphosphate carboxylase large chain (476 aa).

Residues N116 and T166 each coordinate substrate. Residue K168 is the Proton acceptor of the active site. K170 serves as a coordination point for substrate. Mg(2+) contacts are provided by K194, D196, and E197. K194 carries the N6-carboxylysine modification. H286 serves as the catalytic Proton acceptor. The substrate site is built by R287, H319, and S371.

It belongs to the RuBisCO large chain family. Type I subfamily. In terms of assembly, heterohexadecamer of 8 large chains and 8 small chains. The cofactor is Mg(2+).

The enzyme catalyses 2 (2R)-3-phosphoglycerate + 2 H(+) = D-ribulose 1,5-bisphosphate + CO2 + H2O. It carries out the reaction D-ribulose 1,5-bisphosphate + O2 = 2-phosphoglycolate + (2R)-3-phosphoglycerate + 2 H(+). In terms of biological role, ruBisCO catalyzes two reactions: the carboxylation of D-ribulose 1,5-bisphosphate, the primary event in carbon dioxide fixation, as well as the oxidative fragmentation of the pentose substrate. Both reactions occur simultaneously and in competition at the same active site. This is Ribulose bisphosphate carboxylase large chain from Pseudonocardia dioxanivorans (strain ATCC 55486 / DSM 44775 / JCM 13855 / CB1190).